Here is a 256-residue protein sequence, read N- to C-terminus: Tryptophan synthase alpha chain (256 aa).

Active-site proton acceptor residues include glutamate 46 and aspartate 57.

It belongs to the TrpA family. Tetramer of two alpha and two beta chains.

It catalyses the reaction (1S,2R)-1-C-(indol-3-yl)glycerol 3-phosphate + L-serine = D-glyceraldehyde 3-phosphate + L-tryptophan + H2O. Its pathway is amino-acid biosynthesis; L-tryptophan biosynthesis; L-tryptophan from chorismate: step 5/5. Its function is as follows. The alpha subunit is responsible for the aldol cleavage of indoleglycerol phosphate to indole and glyceraldehyde 3-phosphate. The sequence is that of Tryptophan synthase alpha chain from Bacteroides thetaiotaomicron (strain ATCC 29148 / DSM 2079 / JCM 5827 / CCUG 10774 / NCTC 10582 / VPI-5482 / E50).